Consider the following 578-residue polypeptide: Proline--tRNA ligase (578 aa).

The protein belongs to the class-II aminoacyl-tRNA synthetase family. ProS type 1 subfamily. Homodimer.

It localises to the cytoplasm. It catalyses the reaction tRNA(Pro) + L-proline + ATP = L-prolyl-tRNA(Pro) + AMP + diphosphate. Catalyzes the attachment of proline to tRNA(Pro) in a two-step reaction: proline is first activated by ATP to form Pro-AMP and then transferred to the acceptor end of tRNA(Pro). As ProRS can inadvertently accommodate and process non-cognate amino acids such as alanine and cysteine, to avoid such errors it has two additional distinct editing activities against alanine. One activity is designated as 'pretransfer' editing and involves the tRNA(Pro)-independent hydrolysis of activated Ala-AMP. The other activity is designated 'posttransfer' editing and involves deacylation of mischarged Ala-tRNA(Pro). The misacylated Cys-tRNA(Pro) is not edited by ProRS. This chain is Proline--tRNA ligase, found in Burkholderia ambifaria (strain MC40-6).